A 324-amino-acid polypeptide reads, in one-letter code: o-succinylbenzoate synthase (324 aa).

Residue Lys135 is the Proton donor of the active site. Mg(2+) contacts are provided by Asp163, Glu192, and Asp215. The Proton acceptor role is filled by Lys237.

This sequence belongs to the mandelate racemase/muconate lactonizing enzyme family. MenC type 1 subfamily. Requires a divalent metal cation as cofactor.

It catalyses the reaction (1R,6R)-6-hydroxy-2-succinyl-cyclohexa-2,4-diene-1-carboxylate = 2-succinylbenzoate + H2O. It functions in the pathway quinol/quinone metabolism; 1,4-dihydroxy-2-naphthoate biosynthesis; 1,4-dihydroxy-2-naphthoate from chorismate: step 4/7. Its pathway is quinol/quinone metabolism; menaquinone biosynthesis. Functionally, converts 2-succinyl-6-hydroxy-2,4-cyclohexadiene-1-carboxylate (SHCHC) to 2-succinylbenzoate (OSB). The polypeptide is o-succinylbenzoate synthase (Aliivibrio fischeri (strain MJ11) (Vibrio fischeri)).